A 696-amino-acid polypeptide reads, in one-letter code: Zinc finger SWIM domain-containing protein 3 (696 aa).

Residues 531 to 572 (VDVQLLEDSHQVSKDGCSCSCSFQQWYHLPCRHILALLHTSQ) form an SWIM-type zinc finger.

The polypeptide is Zinc finger SWIM domain-containing protein 3 (ZSWIM3) (Homo sapiens (Human)).